We begin with the raw amino-acid sequence, 140 residues long: Protein E6 (140 aa).

Zinc fingers lie at residues 27 to 63 (CIFC…CSEC) and 100 to 136 (CICC…CRNC).

The protein belongs to the papillomaviridae E6 protein family. Forms homodimers. Interacts with ubiquitin-protein ligase UBE3A/E6-AP; this interaction stimulates UBE3A ubiquitin activity. Interacts with host BAK1.

Its subcellular location is the host cytoplasm. It is found in the host nucleus. Plays a major role in the induction and maintenance of cellular transformation. E6 associates with host UBE3A/E6-AP ubiquitin-protein ligase and modulates its activity. Protects host keratinocytes from apoptosis by mediating the degradation of host BAK1. May also inhibit host immune response. The sequence is that of Protein E6 from Human papillomavirus 4.